The chain runs to 129 residues: MAKEAARVRRRERKNITSGVAHVNSTFNNTMITITDAQGNAIAWSSAGAKGFKGSRKSTPFAAQIAAEDCAKKAQEHGMKSLEVEVCGPGSGRESALRALQAAGFMITSIRDVTPIPHNGCRPRKKRRV.

This sequence belongs to the universal ribosomal protein uS11 family. In terms of assembly, part of the 30S ribosomal subunit. Interacts with proteins S7 and S18. Binds to IF-3.

Its function is as follows. Located on the platform of the 30S subunit, it bridges several disparate RNA helices of the 16S rRNA. Forms part of the Shine-Dalgarno cleft in the 70S ribosome. The sequence is that of Small ribosomal subunit protein uS11 from Agrobacterium fabrum (strain C58 / ATCC 33970) (Agrobacterium tumefaciens (strain C58)).